Consider the following 95-residue polypeptide: Small ribosomal subunit protein bS6 (95 aa).

Belongs to the bacterial ribosomal protein bS6 family.

Functionally, binds together with bS18 to 16S ribosomal RNA. In Corynebacterium urealyticum (strain ATCC 43042 / DSM 7109), this protein is Small ribosomal subunit protein bS6.